Reading from the N-terminus, the 725-residue chain is Ribonucleoside-diphosphate reductase subunit alpha (725 aa).

Residues Thr-172, 188 to 189, Gly-217, 397 to 401, and 599 to 603 contribute to the substrate site; these read SC, NLCSE, and PTGSI. Cys-189 and Cys-426 are joined by a disulfide. The active-site Proton acceptor is Asn-397. Cys-399 functions as the Cysteine radical intermediate in the catalytic mechanism. The Proton acceptor role is filled by Glu-401.

It belongs to the ribonucleoside diphosphate reductase large chain family. As to quaternary structure, tetramer of two alpha and two beta subunits. Co-immunoprecipitates with DarG in the presence and absence of darT.

The catalysed reaction is a 2'-deoxyribonucleoside 5'-diphosphate + [thioredoxin]-disulfide + H2O = a ribonucleoside 5'-diphosphate + [thioredoxin]-dithiol. Under complex allosteric control mediated by deoxynucleoside triphosphates and ATP binding. The type of nucleotide bound at the specificity site determines substrate preference. It seems probable that ATP makes the enzyme reduce CDP and UDP, dGTP favors ADP reduction and dTTP favors GDP reduction. CDP reduction is stimulated by dATP. Its function is as follows. Provides the precursors necessary for DNA synthesis. Catalyzes the biosynthesis of deoxyribonucleotides from the corresponding ribonucleotides. When coexpressed in E.coli with nrdF2 the 2 proteins complement a temperature-sensitive E.coli mutant, however coexpression with nrdF1 does not complement. The chain is Ribonucleoside-diphosphate reductase subunit alpha (nrdE) from Mycobacterium tuberculosis (strain ATCC 25618 / H37Rv).